The primary structure comprises 791 residues: Disintegrin and metalloproteinase domain-containing protein 1a (791 aa).

Positions 1-65 (MSVAAAGRGF…LLIFLPSTFC (65 aa)) are cleaved as a signal peptide. N-linked (GlcNAc...) asparagine glycosylation occurs at asparagine 72. Residues 201 to 220 (CSVTPKDSPGDTSHPPRSRK) are disordered. A Peptidase M12B domain is found at 235–429 (KYVEMFVVVN…HRGACLLDEP (195 aa)). N-linked (GlcNAc...) asparagine glycosylation is present at asparagine 256. 3 disulfides stabilise this stretch: cysteine 345-cysteine 424, cysteine 385-cysteine 408, and cysteine 387-cysteine 393. A Zn(2+)-binding site is contributed by histidine 370. Glutamate 371 is a catalytic residue. 2 residues coordinate Zn(2+): histidine 374 and histidine 380. 2 N-linked (GlcNAc...) asparagine glycosylation sites follow: asparagine 407 and asparagine 484. The region spanning 438–522 (AANCGNGVVE…ECPANSYMQD (85 aa)) is the Disintegrin domain. Residues cysteine 494 and cysteine 514 are joined by a disulfide bond. N-linked (GlcNAc...) asparagine glycosylation is present at asparagine 630. The 35-residue stretch at 663–697 (LQYNCEPQEMCHGNGVCNNFKHCHCDAGFAPPDCS) folds into the EGF-like domain. Intrachain disulfides connect cysteine 667-cysteine 679, cysteine 673-cysteine 685, and cysteine 687-cysteine 696. The chain crosses the membrane as a helical span at residues 741 to 761 (VMVLVVPIFLVVLLCCLMLIA). Topologically, residues 762–791 (YLWSEVQEVVSPPSSSESSSSSSWSDSDSQ) are cytoplasmic. The tract at residues 772–791 (SPPSSSESSSSSSWSDSDSQ) is disordered.

In terms of assembly, heterodimer with ADAM2/fertilin subunit beta. As to expression, testis.

Its subcellular location is the membrane. Its function is as follows. May be involved in sperm-egg fusion. In Mus musculus (Mouse), this protein is Disintegrin and metalloproteinase domain-containing protein 1a (Adam1a).